The sequence spans 140 residues: Putative pre-16S rRNA nuclease (140 aa).

It belongs to the YqgF nuclease family.

It is found in the cytoplasm. Could be a nuclease involved in processing of the 5'-end of pre-16S rRNA. The polypeptide is Putative pre-16S rRNA nuclease (Aeromonas salmonicida (strain A449)).